A 704-amino-acid polypeptide reads, in one-letter code: Elongation factor G 1 (704 aa).

Residues 8-285 (EKIRNIGISA…AVCAFLPNPK (278 aa)) form the tr-type G domain. GTP-binding positions include 17-24 (AHIDSGKT), 84-88 (DTPGH), and 138-141 (NKMD).

Belongs to the TRAFAC class translation factor GTPase superfamily. Classic translation factor GTPase family. EF-G/EF-2 subfamily.

It is found in the cytoplasm. Its function is as follows. Catalyzes the GTP-dependent ribosomal translocation step during translation elongation. During this step, the ribosome changes from the pre-translocational (PRE) to the post-translocational (POST) state as the newly formed A-site-bound peptidyl-tRNA and P-site-bound deacylated tRNA move to the P and E sites, respectively. Catalyzes the coordinated movement of the two tRNA molecules, the mRNA and conformational changes in the ribosome. This Myxococcus xanthus (strain DK1622) protein is Elongation factor G 1.